The sequence spans 367 residues: C-C chemokine receptor type 9 (367 aa).

The Extracellular portion of the chain corresponds to 1–46; it reads MVPTEATSLILNPSDDYGYDGTPPMEYDTNLTDYFCEKSHVRQFAG. An N-linked (GlcNAc...) asparagine glycan is attached at Asn-30. 2 cysteine pairs are disulfide-bonded: Cys-36–Cys-287 and Cys-117–Cys-196. A helical membrane pass occupies residues 47–72; the sequence is HFLPPLYWLVFIVGAVGNSLVILVYW. Over 73–83 the chain is Cytoplasmic; that stretch reads YCTRVKTMTDM. Residues 84-107 form a helical membrane-spanning segment; it reads FLLNLAIADLLFLTTLPFWAIAAA. Residues 108–118 are Extracellular-facing; sequence DQWKFQTFMCK. A helical membrane pass occupies residues 119–148; sequence VVNSMYKMNFYSCVLLIMCISVDRYIAIAQ. Over 149 to 157 the chain is Cytoplasmic; it reads AMRAQMWRQ. The helical transmembrane segment at 158–183 threads the bilayer; sequence KRLLYSKMVCFTIWVMAAALCLPELL. Topologically, residues 184–206 are extracellular; the sequence is YSQVKEEHGTAICTVVYSSNEST. Asn-203 carries N-linked (GlcNAc...) asparagine glycosylation. The helical transmembrane segment at 207–241 threads the bilayer; the sequence is KLKSAVLTLKVTLGFFLPFVVMACCYAIIIHTLIR. Over 242–246 the chain is Cytoplasmic; sequence AKKSS. The chain crosses the membrane as a helical span at residues 247–281; sequence KHKALKVTITVLTVFVLSQFPHNCVLLVQTIDAYA. Topologically, residues 282–288 are extracellular; sequence TFISSCA. The helical transmembrane segment at 289 to 319 threads the bilayer; it reads LSIKIDICFQVTQTVAFFHSCLNPVLYVFVG. Over 320–367 the chain is Cytoplasmic; the sequence is ERFRRDLVKTLKNLGCISQAQWVSFTRREGSLKLSSMLLETTSGALSF.

This sequence belongs to the G-protein coupled receptor 1 family.

It localises to the cell membrane. Functionally, receptor for chemokine SCYA25/TECK. Subsequently transduces a signal by increasing the intracellular calcium ions level. In Ovis aries (Sheep), this protein is C-C chemokine receptor type 9 (CCR9).